Reading from the N-terminus, the 71-residue chain is ATP synthase subunit c (71 aa).

A run of 2 helical transmembrane segments spans residues 5 to 25 (AIGIAAGLAAIGGAIGVAIIV) and 47 to 67 (FIGAPLAEAVPIIAIVIAFLL).

It belongs to the ATPase C chain family. In terms of assembly, F-type ATPases have 2 components, F(1) - the catalytic core - and F(0) - the membrane proton channel. F(1) has five subunits: alpha(3), beta(3), gamma(1), delta(1), epsilon(1). F(0) has three main subunits: a(1), b(2) and c(10-14). The alpha and beta chains form an alternating ring which encloses part of the gamma chain. F(1) is attached to F(0) by a central stalk formed by the gamma and epsilon chains, while a peripheral stalk is formed by the delta and b chains.

Its subcellular location is the cell membrane. Functionally, f(1)F(0) ATP synthase produces ATP from ADP in the presence of a proton or sodium gradient. F-type ATPases consist of two structural domains, F(1) containing the extramembraneous catalytic core and F(0) containing the membrane proton channel, linked together by a central stalk and a peripheral stalk. During catalysis, ATP synthesis in the catalytic domain of F(1) is coupled via a rotary mechanism of the central stalk subunits to proton translocation. In terms of biological role, key component of the F(0) channel; it plays a direct role in translocation across the membrane. A homomeric c-ring of between 10-14 subunits forms the central stalk rotor element with the F(1) delta and epsilon subunits. This Shouchella clausii (strain KSM-K16) (Alkalihalobacillus clausii) protein is ATP synthase subunit c.